The chain runs to 349 residues: Sterol-4-alpha-carboxylate 3-dehydrogenase ERG26, decarboxylating (349 aa).

NADP(+) is bound by residues 11–17, 62–63, and 84–86; these read GGSGFLG, DL, and CAS. Residues serine 124 and tyrosine 151 each contribute to the substrate site. Residues tyrosine 151, lysine 155, and 179–182 contribute to the NADP(+) site; that span reads PAGI. Residue lysine 155 is the Proton donor of the active site.

Belongs to the 3-beta-HSD family. As to quaternary structure, heterotetramer of ERG25, ERG26, ERG27 and ERG28. ERG28 acts as a scaffold to tether ERG27 and other 4,4-demethylation-related enzymes, forming a demethylation enzyme complex, in the endoplasmic reticulum.

It is found in the endoplasmic reticulum membrane. It catalyses the reaction 4beta-methylzymosterol-4alpha-carboxylate + NADP(+) = 3-dehydro-4-methylzymosterol + CO2 + NADPH. Its pathway is steroid biosynthesis; zymosterol biosynthesis; zymosterol from lanosterol: step 4/6. Inhibited by FR171456, a natural product with broad antifungal activity. In terms of biological role, sterol-4-alpha-carboxylate 3-dehydrogenase; part of the third module of ergosterol biosynthesis pathway that includes the late steps of the pathway. ERG26 is a catalytic component of the C-4 demethylation complex that catalyzes the oxidative decarboxylation that results in a reduction of the 3-beta-hydroxy group at the C-3 carbon to an oxo group. The third module or late pathway involves the ergosterol synthesis itself through consecutive reactions that mainly occur in the endoplasmic reticulum (ER) membrane. Firstly, the squalene synthase ERG9 catalyzes the condensation of 2 farnesyl pyrophosphate moieties to form squalene, which is the precursor of all steroids. Squalene synthase is crucial for balancing the incorporation of farnesyl diphosphate (FPP) into sterol and nonsterol isoprene synthesis. Secondly, the squalene epoxidase ERG1 catalyzes the stereospecific oxidation of squalene to (S)-2,3-epoxysqualene, which is considered to be a rate-limiting enzyme in steroid biosynthesis. Then, the lanosterol synthase ERG7 catalyzes the cyclization of (S)-2,3 oxidosqualene to lanosterol, a reaction that forms the sterol core. In the next steps, lanosterol is transformed to zymosterol through a complex process involving various demethylation, reduction and desaturation reactions. The lanosterol 14-alpha-demethylase ERG11 (also known as CYP51) catalyzes C14-demethylation of lanosterol to produce 4,4'-dimethyl cholesta-8,14,24-triene-3-beta-ol, which is critical for ergosterol biosynthesis. The C-14 reductase ERG24 reduces the C14=C15 double bond of 4,4-dimethyl-cholesta-8,14,24-trienol to produce 4,4-dimethyl-cholesta-8,24-dienol. 4,4-dimethyl-cholesta-8,24-dienol is substrate of the C-4 demethylation complex ERG25-ERG26-ERG27 in which ERG25 catalyzes the three-step monooxygenation required for the demethylation of 4,4-dimethyl and 4alpha-methylsterols, ERG26 catalyzes the oxidative decarboxylation that results in a reduction of the 3-beta-hydroxy group at the C-3 carbon to an oxo group, and ERG27 is responsible for the reduction of the keto group on the C-3. ERG28 has a role as a scaffold to help anchor ERG25, ERG26 and ERG27 to the endoplasmic reticulum and ERG29 regulates the activity of the iron-containing C4-methylsterol oxidase ERG25. Then, the sterol 24-C-methyltransferase ERG6 catalyzes the methyl transfer from S-adenosyl-methionine to the C-24 of zymosterol to form fecosterol. The C-8 sterol isomerase ERG2 catalyzes the reaction which results in unsaturation at C-7 in the B ring of sterols and thus converts fecosterol to episterol. The sterol-C5-desaturase ERG3 then catalyzes the introduction of a C-5 double bond in the B ring to produce 5-dehydroepisterol. The C-22 sterol desaturase ERG5 further converts 5-dehydroepisterol into ergosta-5,7,22,24(28)-tetraen-3beta-ol by forming the C-22(23) double bond in the sterol side chain. Finally, ergosta-5,7,22,24(28)-tetraen-3beta-ol is substrate of the C-24(28) sterol reductase ERG4 to produce ergosterol. In Saccharomyces cerevisiae (strain ATCC 204508 / S288c) (Baker's yeast), this protein is Sterol-4-alpha-carboxylate 3-dehydrogenase ERG26, decarboxylating.